Here is a 447-residue protein sequence, read N- to C-terminus: Maltoporin (447 aa).

The first 26 residues, 1–26 (MELRMKKVSVIAAAVAATLAAGSAFA), serve as a signal peptide directing secretion.

This sequence belongs to the porin LamB (TC 1.B.3) family. In terms of assembly, homotrimer formed of three 18-stranded antiparallel beta-barrels, containing three independent channels.

Its subcellular location is the cell outer membrane. It carries out the reaction beta-maltose(in) = beta-maltose(out). Functionally, involved in the transport of maltose and maltodextrins. The sequence is that of Maltoporin from Vibrio campbellii (strain ATCC BAA-1116).